Here is a 103-residue protein sequence, read N- to C-terminus: Large ribosomal subunit protein uL24 (103 aa).

It belongs to the universal ribosomal protein uL24 family. In terms of assembly, part of the 50S ribosomal subunit.

In terms of biological role, one of two assembly initiator proteins, it binds directly to the 5'-end of the 23S rRNA, where it nucleates assembly of the 50S subunit. Its function is as follows. One of the proteins that surrounds the polypeptide exit tunnel on the outside of the subunit. The sequence is that of Large ribosomal subunit protein uL24 from Sinorhizobium fredii (strain NBRC 101917 / NGR234).